The following is a 675-amino-acid chain: MHHVNKYFNQTMVIEALKMSFYKLNPKQLIKNPIMFVVEVGMILTLILICFPDIFGTSYLSRGYLITIFIILLITILFANFSEAFAEGRGKAQADSLRQAQSNLTARLIEENGAYRIVNATELKAGQNIRVENGETIPADGVVINGLATVDESAITGESAPVIKESGGDFDGVIGGTLVTSDWLEIRVESEAGTSFLDKMIALVEGAERNKTPNEIALFTLLTTLTIIFLVVIVTLYPIASYLHLILPIAMLIALTVCLIPTTIGGLLSAIGIAGMDRVTQFNVLAKSGRAVEVCGDVDVMILDKTGTITYGNRIASEFLPVNQQMLEKLIVAAYMSSIYDDTPEGKSIVRLAKQMYINELPKDIDGTYKTFTAETRMSGIITNEISVFKGAPNSMINLVKQQQGNIPLNIESLCMDVSSKGGTPLIVIENNVMLGVIYLKDVIKDGLVERFTELRKMGIETVMCTGDNALTAATIAKEAGVDRFVAECKPEDKIKVIKDEQAKGHIVAMTGDGTNDAPALAQANIGLAMNSGTISAKEAANLIDLDSNPTKLIEVVKIGKQLLMTRGALTTFSLANDVAKYFAILPALMMSTIPEMTSLNIMHLSSPKSAIISALIFNALIIVALIPIAMKGVKVKGYSIDRIFINNMLIYGLGGLIVPFLGIKLIDMIVQFFV.

Helical transmembrane passes span 34–54 (IMFV…FPDI), 65–85 (LITI…SEAF), 216–236 (IALF…IVTL), and 245–265 (LILP…TTIG). Residue Asp-304 is the 4-aspartylphosphate intermediate of the active site. Residues Asp-341, Glu-345, 372 to 379 (FTAETRMS), and Lys-390 contribute to the ATP site. Mg(2+) is bound by residues Asp-513 and Asp-517. 3 helical membrane-spanning segments follow: residues 569–591 (ALTT…ALMM), 611–631 (AIIS…PIAM), and 644–664 (IFIN…FLGI).

The protein belongs to the cation transport ATPase (P-type) (TC 3.A.3) family. Type IA subfamily. In terms of assembly, the system is composed of three essential subunits: KdpA, KdpB and KdpC.

It localises to the cell membrane. It catalyses the reaction K(+)(out) + ATP + H2O = K(+)(in) + ADP + phosphate + H(+). Its function is as follows. Part of the high-affinity ATP-driven potassium transport (or Kdp) system, which catalyzes the hydrolysis of ATP coupled with the electrogenic transport of potassium into the cytoplasm. This subunit is responsible for energy coupling to the transport system and for the release of the potassium ions to the cytoplasm. This chain is Potassium-transporting ATPase ATP-binding subunit, found in Staphylococcus aureus (strain MSSA476).